The primary structure comprises 688 residues: Lipase (688 aa).

The first 35 residues, 1–35, serve as a signal peptide directing secretion; sequence MKTRQNKYSIRKFSVGASSILIAALLFMGGGSAQA. Residues 31–309 are disordered; the sequence is GSAQAAEQQQ…KSAKQKQYKN (279 aa). Positions 36–302 are cleaved as a propeptide — removed in mature form; the sequence is AEQQQDKGTV…KNEDQTNKSA (267 aa). Polar residues predominate over residues 45–54; sequence VENSTTQSIG. Over residues 68–79 the composition is skewed to low complexity; that stretch reads NKNVNEKSNVNS. Composition is skewed to basic and acidic residues over residues 84 to 95 and 103 to 143; these read ESLHNETPKNED and SQND…KHAS. The segment covering 144 to 172 has biased composition (polar residues); the sequence is ENNQTLHSKAAQSNEDVKTKPSQLDNTAA. Over residues 173 to 183 the composition is skewed to basic and acidic residues; sequence KQEDSQKENLS. The span at 184-211 shows a compositional bias: polar residues; it reads KQDTQSSKTTDLLRATAQNQSKDSQSTE. Positions 240 to 267 are enriched in basic and acidic residues; that stretch reads SKEEPLKVDKQANPTTDKDKSSKNDKGS. The span at 274 to 289 shows a compositional bias: polar residues; that stretch reads LESNAVATTNKQSKQQ. The Nucleophile role is filled by Ser418. The active-site Charge relay system is Asp609. Residue Asp647 participates in Ca(2+) binding. His648 serves as the catalytic Charge relay system. Ca(2+)-binding residues include Asp650, Asp655, and Asp658.

The protein belongs to the AB hydrolase superfamily. Lipase family.

Its subcellular location is the secreted. It carries out the reaction a triacylglycerol + H2O = a diacylglycerol + a fatty acid + H(+). The chain is Lipase (lip) from Staphylococcus epidermidis (strain ATCC 12228 / FDA PCI 1200).